We begin with the raw amino-acid sequence, 789 residues long: MLTTGIFWMTVLISHIQERGIVGVEGQELVHPKKLPLLHKRDLERIHDSDIPEEYEEELLYEIKLGKKTLILHLLKAREFLSSNYSETYYNVKREVFTKHPQILDHCFYQGSIIHEFDSAASISTCNGLRGFFRVNDQRYLIEPVKYSDDGEHLVYKYNVKAPYATNHSCVGLNFTKKSALIDVENIEEHNAEDHHKEKFIELFVVADEYVYRRNNKPQNKLRKRIWGMVNFVNMIYKTLNIHVTLAGFEIWSAGDKIEIVSNLESTLLHFSTWQETVLKKRKDFDHVILLSGKWLYTSMQGIAYPGGICQILRSCSVVKDLLPDVNIIGNRMAHQLGHSLGMQHDGFPCTCPLGKCVMGDGSIPAIKFSKCSQTQYQQFLQDQKPACILNNPFPEEFNDYPFCGNKKVDEGEECDCGPVQECTNPCCDAHKCVLKPGFTCVEGECCESCQMKKEGAVCRLAKNECDISEVCTGYSPECPKDEFQANGFPCRNGEGYCFMGLCPTRNEQCSELFIGGAEESHSLCYRMNKKGNRFGYCKNKGNTFVPCEEKDLKCGKIYCSGGRPSSRLGEDKAYNLKNVKQNVTIKCRTMFLHHNSRDMGLVNSGTKCGDGMVCSNGECIEMEKAYNSTICSSPCDENDVDDNEPECQCEEGSIITEWGEALNLTSVSIMVIVLVMVIIGVGLVILLIRYQKCIKMKQVQSSPREIRGVENKGYFPEEHQTRSEPILTDIHPLHTTAESLERVPSSFSSPHYITLKSVSKDSRGIADPKQTDNVNLNLDTQSGCERLG.

The first 23 residues, 1–23 (MLTTGIFWMTVLISHIQERGIVG), serve as a signal peptide directing secretion. A propeptide spanning residues 24–176 (VEGQELVHPK…NHSCVGLNFT (153 aa)) is cleaved from the precursor. At 24–667 (VEGQELVHPK…EWGEALNLTS (644 aa)) the chain is on the extracellular side. N-linked (GlcNAc...) asparagine glycosylation is found at Asn-84, Asn-167, and Asn-174. Positions 199 to 393 (KFIELFVVAD…QKPACILNNP (195 aa)) constitute a Peptidase M12B domain. 4 disulfide bridges follow: Cys-310-Cys-388, Cys-350-Cys-372, Cys-352-Cys-357, and Cys-459-Cys-479. Positions 401 to 487 (YPFCGNKKVD…ECPKDEFQAN (87 aa)) constitute a Disintegrin domain. Residues Asn-583, Asn-628, and Asn-664 are each glycosylated (N-linked (GlcNAc...) asparagine). A helical membrane pass occupies residues 668 to 689 (VSIMVIVLVMVIIGVGLVILLI). The Cytoplasmic portion of the chain corresponds to 690–789 (RYQKCIKMKQ…DTQSGCERLG (100 aa)). Residues 764-789 (RGIADPKQTDNVNLNLDTQSGCERLG) form a disordered region. Residues 772–789 (TDNVNLNLDTQSGCERLG) are compositionally biased toward polar residues.

As to quaternary structure, interacts with ITM2B in sperm; the interaction increases following capacitation. Interacts with HSPA5 and CANX. In terms of tissue distribution, expressed in both the head and tails of sperm (at protein level). Expressed in the epididymis (at protein level). Abundantly expressed in the apical region of the proximal caput epididymal epithelium, with decreasing expression in the mid and distal caput epididymal epithelium.

It is found in the membrane. Required for normal male fertility via maintenance of epithelial cell morphology in the caput epididymis and subsequently correct epididymis lumen structure required for sperm development. Plays a role in sperm motility, flagella morphology and tyrosine phosphorylation during sperm capacitance. Plays a role in normal expression levels of HSPA5, ITM2B and ADAM2 in sperm both prior to and post-capacitation. This is a non catalytic metalloprotease-like protein. This Mus musculus (Mouse) protein is Disintegrin and metalloproteinase domain-containing protein 7.